The chain runs to 281 residues: DegV domain-containing protein YqaC (281 aa).

The region spanning 3–279 (LAVITDSSAD…LNTVAYGISP (277 aa)) is the DegV domain. Residues Thr-60 and Ser-93 each contribute to the hexadecanoate site.

Its function is as follows. May bind long-chain fatty acids, such as palmitate, and may play a role in lipid transport or fatty acid metabolism. The chain is DegV domain-containing protein YqaC (yqaC) from Lactococcus lactis subsp. lactis (strain IL1403) (Streptococcus lactis).